The chain runs to 952 residues: Plasma membrane ATPase 4 (952 aa).

At 1–64 (MAKAISLEEI…EKNESKILKF (64 aa)) the chain is on the cytoplasmic side. The chain crosses the membrane as a helical span at residues 65–84 (LGFMWNPLSWVMEAAAVMAI). The Extracellular portion of the chain corresponds to 85–96 (ALANGDGKPPDW). A helical membrane pass occupies residues 97 to 117 (QDFIGIICLLVINSTISFIEE). Topologically, residues 118–246 (NNAGNAAAAL…GHFQKVLTAI (129 aa)) are cytoplasmic. Residues 247–267 (GNFCICSIAIGMLVEIIVMYP) form a helical membrane-spanning segment. The Extracellular portion of the chain corresponds to 268-277 (IQHRKYRDGI). A helical transmembrane segment spans residues 278-299 (DNLLVLLIGGIPIAMPTVLSVT). At 300 to 646 (MAIGSHRLSQ…TSRAIFQRMK (347 aa)) the chain is on the cytoplasmic side. Asp332 functions as the 4-aspartylphosphate intermediate in the catalytic mechanism. Residues Asp591 and Asp595 each contribute to the Mg(2+) site. The chain crosses the membrane as a helical span at residues 647-668 (NYTIYAVSITIRIVFGFMFIAL). Residues 669–673 (IWKYD) lie on the Extracellular side of the membrane. Residues 674 to 696 (FSAFMVLIIAILNDGTIMTISKD) traverse the membrane as a helical segment. Residues 697 to 712 (RVKPSPMPDSWKLKEI) lie on the Cytoplasmic side of the membrane. Residues 713–733 (FATGVVLGGYQALMTVVFFWA) traverse the membrane as a helical segment. The Extracellular segment spans residues 734-754 (MHDTDFFSDKFGVKSLRNSDE). Residues 755 to 775 (EMMSALYLQVSIISQALIFVT) traverse the membrane as a helical segment. Residues 776 to 787 (RSRSWSFLERPG) lie on the Cytoplasmic side of the membrane. The helical transmembrane segment at 788-808 (MLLVIAFMIAQLVATLIAVYA) threads the bilayer. Residues 809–817 (NWAFARVKG) lie on the Extracellular side of the membrane. The helical transmembrane segment at 818-838 (CGWGWAGVIWLYSIIFYLPLD) threads the bilayer. The Cytoplasmic portion of the chain corresponds to 839-952 (IMKFAIRYIL…IETIQQHYTV (114 aa)).

The protein belongs to the cation transport ATPase (P-type) (TC 3.A.3) family. Type IIIA subfamily. As to expression, expressed at high levels in root, stem, leaf and flower.

The protein localises to the cell membrane. The enzyme catalyses ATP + H2O + H(+)(in) = ADP + phosphate + 2 H(+)(out). The plasma membrane ATPase of plants and fungi is a hydrogen ion pump. The proton gradient it generates drives the active transport of nutrients by H(+)-symport. The resulting external acidification and/or internal alkinization may mediate growth responses. The protein is Plasma membrane ATPase 4 (PMA4) of Nicotiana plumbaginifolia (Leadwort-leaved tobacco).